The primary structure comprises 481 residues: ATP synthase subunit beta, chloroplastic (481 aa).

162–169 provides a ligand contact to ATP; that stretch reads GGAGVGKT.

The protein belongs to the ATPase alpha/beta chains family. As to quaternary structure, F-type ATPases have 2 components, F(1) - the catalytic core - and F(0) - the membrane proton channel. F(1) has five subunits: alpha(3), beta(3), gamma(1), delta(1), epsilon(1). F(0) has four main subunits: a(1), b(1), b'(1) and c(10-14). The alpha and beta chains form an alternating ring which encloses part of the gamma chain. F(1) is attached to F(0) by a central stalk formed by the gamma and epsilon chains, while a peripheral stalk is formed by the delta, b and b' chains.

Its subcellular location is the plastid. The protein localises to the chloroplast thylakoid membrane. It catalyses the reaction ATP + H2O + 4 H(+)(in) = ADP + phosphate + 5 H(+)(out). F(1)F(0) ATP synthase produces ATP from ADP in the presence of a proton or sodium gradient. F-type ATPases consist of two structural domains, F(1) containing the extramembraneous catalytic core and F(0) containing the membrane proton channel, linked together by a central stalk and a peripheral stalk. During catalysis, ATP synthesis in the catalytic domain of F(1) is coupled via a rotary mechanism of the central stalk subunits to proton translocation. In terms of biological role, produces ATP from ADP in the presence of a proton gradient across the membrane. The catalytic sites are hosted primarily by the beta subunits. In Chlamydomonas reinhardtii (Chlamydomonas smithii), this protein is ATP synthase subunit beta, chloroplastic.